The primary structure comprises 155 residues: Immunoglobulin domain-containing protein oig-4 (155 aa).

Positions 1–22 (MSFRLWGRCIFFFCFLLEAIDS) are cleaved as a signal peptide. 2 N-linked (GlcNAc...) asparagine glycosylation sites follow: Asn55 and Asn114. The Ig-like C2-type domain maps to 73-154 (GYKLLIICKA…MAKNFKAEYT (82 aa)). A disulfide bond links Cys80 and Cys136.

Interacts with the non-alpha subunit of nicotinic acetylcholine receptor unc-29 and lev-10 to stabilize the complex formed between unc-29 and lev-10. Expressed in body wall muscle cells, the pharyngeal muscle cell pm6 and in four head neurons.

It localises to the synapse. It is found in the secreted. Required for the localization of acetylcholine receptors at neuromuscular junctions and for subsequently controlling the response evoked by receptor stimulation. This Caenorhabditis elegans protein is Immunoglobulin domain-containing protein oig-4.